The primary structure comprises 510 residues: NAD(P)H-quinone oxidoreductase subunit 2 B, chloroplastic (510 aa).

Helical transmembrane passes span 24–44, 59–79, 99–119, 124–144, 150–170, 184–204, 229–249, 295–315, 323–343, 354–374, 395–415, 418–438, and 484–504; these read LLLFDGSFIFPECILIFGLIL, WFYFISSTSLVMSIAALLFRW, IFQFLILLCSTLCIPLSVEYI, MAITEFLLFVLTATLGGMFLC, ITIFVAPECFSLCSYLLSGYT, LLMGGASSSILVHGFSWLYGL, ISIALIFITVGIGFKLSLAPF, WHLLLEILAILSMILGNLIAI, MLAYSSIGQIGYVIIGIIVGD, YMLFYISMNLGTFARIVLFGL, ALSLALCLLSLGGLPPLAGFF, LHLFWCGWQAGLYFLVSIGLL, and MIVCVIASTIPGISMNPILAI.

Belongs to the complex I subunit 2 family. As to quaternary structure, NDH is composed of at least 16 different subunits, 5 of which are encoded in the nucleus.

It is found in the plastid. The protein localises to the chloroplast thylakoid membrane. The enzyme catalyses a plastoquinone + NADH + (n+1) H(+)(in) = a plastoquinol + NAD(+) + n H(+)(out). The catalysed reaction is a plastoquinone + NADPH + (n+1) H(+)(in) = a plastoquinol + NADP(+) + n H(+)(out). Its function is as follows. NDH shuttles electrons from NAD(P)H:plastoquinone, via FMN and iron-sulfur (Fe-S) centers, to quinones in the photosynthetic chain and possibly in a chloroplast respiratory chain. The immediate electron acceptor for the enzyme in this species is believed to be plastoquinone. Couples the redox reaction to proton translocation, and thus conserves the redox energy in a proton gradient. This Acorus calamus (Sweet flag) protein is NAD(P)H-quinone oxidoreductase subunit 2 B, chloroplastic.